Reading from the N-terminus, the 431-residue chain is 5-methylthioadenosine/S-adenosylhomocysteine deaminase (431 aa).

Residues H66 and H68 each coordinate Zn(2+). Substrate contacts are provided by E95, R147, and H185. H212 serves as a coordination point for Zn(2+). Residues E215 and D300 each coordinate substrate. D300 serves as a coordination point for Zn(2+).

The protein belongs to the metallo-dependent hydrolases superfamily. MTA/SAH deaminase family. Requires Zn(2+) as cofactor.

The enzyme catalyses S-adenosyl-L-homocysteine + H2O + H(+) = S-inosyl-L-homocysteine + NH4(+). The catalysed reaction is S-methyl-5'-thioadenosine + H2O + H(+) = S-methyl-5'-thioinosine + NH4(+). Its function is as follows. Catalyzes the deamination of 5-methylthioadenosine and S-adenosyl-L-homocysteine into 5-methylthioinosine and S-inosyl-L-homocysteine, respectively. Is also able to deaminate adenosine. The sequence is that of 5-methylthioadenosine/S-adenosylhomocysteine deaminase from Desulfitobacterium hafniense (strain Y51).